The chain runs to 213 residues: Neuroligin-4, X-linked (213 aa).

The disordered stretch occupies residues 1–56; the sequence is FQYVSTTTKVPPPDMTSFPYGTRRSPAKIWPTTKRPAITPANNPKHSKDPHKTGPE. Topologically, residues 1-73 are extracellular; it reads FQYVSTTTKV…TKRDYSTELS (73 aa). The span at 46–55 shows a compositional bias: basic and acidic residues; that stretch reads HSKDPHKTGP. Residues 74 to 94 traverse the membrane as a helical segment; that stretch reads VTIAVGASLLFLNILAFAALY. The Cytoplasmic portion of the chain corresponds to 95 to 213; sequence YKKDKRRHET…LPHGHSTTRV (119 aa). Serine 109 carries the phosphoserine modification.

This sequence belongs to the type-B carboxylesterase/lipase family. As to quaternary structure, homodimer. Interacts with NRXN1 in a calcium-dependent manner. Interaction with neurexins is mediated by heparan sulfate glycan modification on neurexin. Interacts through its C-terminus with DLG4/PSD-95 third PDZ domain.

It is found in the cell membrane. The protein resides in the postsynaptic density membrane. Cell surface protein involved in cell-cell-interactions via its interactions with neurexin family members. In Macaca mulatta (Rhesus macaque), this protein is Neuroligin-4, X-linked (NLGN4X).